The following is a 247-amino-acid chain: Triosephosphate isomerase (247 aa).

Residues Asn10 and Lys12 each coordinate substrate. The active-site Electrophile is His94. Glu164 functions as the Proton acceptor in the catalytic mechanism.

This sequence belongs to the triosephosphate isomerase family. As to quaternary structure, homodimer.

It catalyses the reaction D-glyceraldehyde 3-phosphate = dihydroxyacetone phosphate. Its pathway is carbohydrate biosynthesis; gluconeogenesis. The protein operates within carbohydrate degradation; glycolysis; D-glyceraldehyde 3-phosphate from glycerone phosphate: step 1/1. In Drosophila melanogaster (Fruit fly), this protein is Triosephosphate isomerase (Tpi).